The following is a 315-amino-acid chain: Ribosomal RNA small subunit methyltransferase H (315 aa).

Residues 33–35, D53, F80, D101, and Q108 each bind S-adenosyl-L-methionine; that span reads AGH.

It belongs to the methyltransferase superfamily. RsmH family.

The protein resides in the cytoplasm. It carries out the reaction cytidine(1402) in 16S rRNA + S-adenosyl-L-methionine = N(4)-methylcytidine(1402) in 16S rRNA + S-adenosyl-L-homocysteine + H(+). Its function is as follows. Specifically methylates the N4 position of cytidine in position 1402 (C1402) of 16S rRNA. The polypeptide is Ribosomal RNA small subunit methyltransferase H (Natranaerobius thermophilus (strain ATCC BAA-1301 / DSM 18059 / JW/NM-WN-LF)).